Reading from the N-terminus, the 291-residue chain is N-acetylmannosamine kinase (291 aa).

Residues 5–12 (AIDIGGTK) and 132–139 (GVGGGVVS) each bind ATP. 4 residues coordinate Zn(2+): His156, Cys166, Cys168, and Cys173.

The protein belongs to the ROK (NagC/XylR) family. NanK subfamily. Homodimer.

The catalysed reaction is an N-acyl-D-mannosamine + ATP = an N-acyl-D-mannosamine 6-phosphate + ADP + H(+). Its pathway is amino-sugar metabolism; N-acetylneuraminate degradation; D-fructose 6-phosphate from N-acetylneuraminate: step 2/5. Catalyzes the phosphorylation of N-acetylmannosamine (ManNAc) to ManNAc-6-P. This Escherichia coli (strain SE11) protein is N-acetylmannosamine kinase.